The chain runs to 489 residues: Protein LMBR1L (489 aa).

At 1-21 (MEAPDYEVLSVREQLFHERIR) the chain is on the extracellular side. The segment at 1 to 59 (MEAPDYEVLSVREQLFHERIRECIISTLLFATLYILCHIFLTRFKKPAEFTTVDDEDAT) is interaction with LGB. Positions 1 to 76 (MEAPDYEVLS…LCTFTLAIAL (76 aa)) are LCN1-binding. The helical transmembrane segment at 22 to 42 (ECIISTLLFATLYILCHIFLT) threads the bilayer. At 43-66 (RFKKPAEFTTVDDEDATVNKIALE) the chain is on the cytoplasmic side. A helical transmembrane segment spans residues 67–87 (LCTFTLAIALGAVLLLPFSII). Residues 88–114 (SNEVLLSLPRNYYIQWLNGSLIHGLWN) are Extracellular-facing. A helical membrane pass occupies residues 115-135 (LVFLFSNLSLIFLMPFAYFFT). The Cytoplasmic portion of the chain corresponds to 136 to 154 (ESEGFAGSRKGVLGRVYET). Residues 155 to 175 (VVMLMLLTLLVLGMVWVASAI) traverse the membrane as a helical segment. At 176 to 196 (VDKNKANRESLYDFWEYYLPY) the chain is on the extracellular side. A helical membrane pass occupies residues 197 to 217 (LYSCISFLGVLLLLVCTPLGL). At 218 to 305 (ARMFSVTGKL…NLGYPLAMLC (88 aa)) the chain is on the cytoplasmic side. A helical transmembrane segment spans residues 306–326 (LLVLTGLSVLIVAIHILELLI). The Extracellular segment spans residues 327–350 (DEAAMPRGMQGTSLGQVSFSKLGS). The chain crosses the membrane as a helical span at residues 351–371 (FGAVIQVVLIFYLMVSSVVGF). Residues 372–388 (YSSPLFRSLRPRWHDTA) are Cytoplasmic-facing. Residues 389-409 (MTQIIGNCVCLLVLSSALPVF) traverse the membrane as a helical segment. The Extracellular segment spans residues 410–431 (SRTLGLTRFDLLGDFGRFNWLG). The helical transmembrane segment at 432–452 (NFYIVFLYNAAFAGLTTLCLV) threads the bilayer. Over 453 to 489 (KTFTAAVRAELIRAFGLDRLPLPVSGFPQASRKTQHQ) the chain is Cytoplasmic.

This sequence belongs to the LIMR family. Dimer. Can also form higher oligomers. Interacts with LCN1; this interaction mediates the endocytosis of LCN1. Interacts with UBAC2, FAF2, VCP, AMFR, ZNRF3, CTNNB1, LRP6, GSK3A and GSK3B. Interacts with DVL2 and RNF43. Interaction with SCGB1A1 has been observed in PubMed:16423471, but not in PubMed:23964685. Interaction with LGB which mediates the endocytosis of LGB has been observed in PubMed:17991420, but not in PubMed:23964685. In terms of tissue distribution, expressed in testis, pituitary gland, adrenal gland, trachea, placenta, thymus, cerebellum, stomach, mammary gland, spinal cord. A weaker expression is detected in colon, pancreas, and prostate.

It localises to the cell membrane. It is found in the endoplasmic reticulum membrane. Functionally, plays an essential role in lymphocyte development by negatively regulating the canonical Wnt signaling pathway. In association with UBAC2 and E3 ubiquitin-protein ligase AMFR, promotes the ubiquitin-mediated degradation of CTNNB1 and Wnt receptors FZD6 and LRP6. LMBR1L stabilizes the beta-catenin destruction complex that is required for regulating CTNNB1 levels. Acts as a LCN1 receptor and can mediate its endocytosis. The polypeptide is Protein LMBR1L (LMBR1L) (Homo sapiens (Human)).